The primary structure comprises 424 residues: UPF0229 protein PFL_5654 (424 aa).

The segment at 85 to 108 (GEHIARPQGGGGGGGGRGKAGNSG) is disordered. The span at 92 to 108 (QGGGGGGGGRGKAGNSG) shows a compositional bias: gly residues.

The protein belongs to the UPF0229 family.

This chain is UPF0229 protein PFL_5654, found in Pseudomonas fluorescens (strain ATCC BAA-477 / NRRL B-23932 / Pf-5).